The primary structure comprises 369 residues: Anhydro-N-acetylmuramic acid kinase (369 aa).

12–19 (GTSMDGVD) contributes to the ATP binding site.

The protein belongs to the anhydro-N-acetylmuramic acid kinase family.

It catalyses the reaction 1,6-anhydro-N-acetyl-beta-muramate + ATP + H2O = N-acetyl-D-muramate 6-phosphate + ADP + H(+). It participates in amino-sugar metabolism; 1,6-anhydro-N-acetylmuramate degradation. It functions in the pathway cell wall biogenesis; peptidoglycan recycling. Functionally, catalyzes the specific phosphorylation of 1,6-anhydro-N-acetylmuramic acid (anhMurNAc) with the simultaneous cleavage of the 1,6-anhydro ring, generating MurNAc-6-P. Is required for the utilization of anhMurNAc either imported from the medium or derived from its own cell wall murein, and thus plays a role in cell wall recycling. The protein is Anhydro-N-acetylmuramic acid kinase of Shewanella baltica (strain OS223).